The sequence spans 446 residues: Glucarate dehydratase-related protein (446 aa).

Substrate-binding residues include histidine 31, threonine 104, tyrosine 149, and lysine 204. The Proton acceptor role is filled by lysine 206. Mg(2+) is bound by residues aspartate 234, glutamate 265, and asparagine 288. 234–236 contributes to the substrate binding site; the sequence is DPN. Residues asparagine 288, 338–340, histidine 367, and arginine 421 each bind substrate; that span reads HSN. Residue histidine 338 is the Proton acceptor of the active site.

It belongs to the mandelate racemase/muconate lactonizing enzyme family. GlucD subfamily. A divalent metal cation is required as a cofactor.

Functionally, does not seem to have an in-vivo activity on glucarate or idarate. Its real substrate is unknown. The chain is Glucarate dehydratase-related protein (gudX) from Escherichia coli (strain K12).